Here is a 155-residue protein sequence, read N- to C-terminus: Transcriptional repressor NrdR (155 aa).

A disordered region spans residues 1-22 (MRCPFCGHDETQVKDSRPSEDG). The segment at 3 to 34 (CPFCGHDETQVKDSRPSEDGAAIRRRRLCPQC) is a zinc-finger region. Over residues 7–22 (GHDETQVKDSRPSEDG) the composition is skewed to basic and acidic residues. The 91-residue stretch at 49-139 (ITILKRSGRR…VYRDFRETQD (91 aa)) folds into the ATP-cone domain.

The protein belongs to the NrdR family. Requires Zn(2+) as cofactor.

In terms of biological role, negatively regulates transcription of bacterial ribonucleotide reductase nrd genes and operons by binding to NrdR-boxes. The protein is Transcriptional repressor NrdR of Phenylobacterium zucineum (strain HLK1).